The following is an 873-amino-acid chain: DNA helicase/primase complex-associated protein (873 aa).

Residues 394–422 (PPLPRDDGDGENNVVEVSSSTGGAHPPSD) form a disordered region.

This sequence belongs to the herpesviridae HEPA family. As to quaternary structure, associates with the primase and the helicase to form the helicase-primase complex. Interacts with the origin-binding protein. Interacts with the polymerase catalytic subunit.

It is found in the host nucleus. Component of the helicase/primase complex. Unwinds the DNA at the replication forks and generates single-stranded DNA for both leading and lagging strand synthesis. The primase synthesizes short RNA primers on the lagging strand that the polymerase presumably elongates using dNTPs. The primase-associated factor has no known catalytic activity in the complex and may serve to facilitate the formation of the replisome by directly interacting with the origin-binding protein and the polymerase. The sequence is that of DNA helicase/primase complex-associated protein (UL102) from Human cytomegalovirus (strain Merlin) (HHV-5).